We begin with the raw amino-acid sequence, 392 residues long: Chorismate synthase (392 aa).

2 residues coordinate NADP(+): R40 and R46. FMN-binding positions include 135 to 137 (RAS), 256 to 257 (QA), G300, 315 to 319 (KPIAT), and R341.

Belongs to the chorismate synthase family. As to quaternary structure, homotetramer. The cofactor is FMNH2.

The enzyme catalyses 5-O-(1-carboxyvinyl)-3-phosphoshikimate = chorismate + phosphate. It participates in metabolic intermediate biosynthesis; chorismate biosynthesis; chorismate from D-erythrose 4-phosphate and phosphoenolpyruvate: step 7/7. Its function is as follows. Catalyzes the anti-1,4-elimination of the C-3 phosphate and the C-6 proR hydrogen from 5-enolpyruvylshikimate-3-phosphate (EPSP) to yield chorismate, which is the branch point compound that serves as the starting substrate for the three terminal pathways of aromatic amino acid biosynthesis. This reaction introduces a second double bond into the aromatic ring system. The sequence is that of Chorismate synthase from Nocardioides sp. (strain ATCC BAA-499 / JS614).